The primary structure comprises 276 residues: Putative pyridoxine kinase (276 aa).

Asn139 provides a ligand contact to ATP. A Mg(2+)-binding site is contributed by Glu142. Residues 176–180 (KGGKA), Asp188, Gly213, and Lys238 each bind ATP.

The protein belongs to the ThiD family.

It catalyses the reaction pyridoxal + ATP = pyridoxal 5'-phosphate + ADP + H(+). Its function is as follows. Phosphorylates B6 vitamers; functions in a salvage pathway. Uses pyridoxal, pyridoxine, and pyridoxamine as substrates. The sequence is that of Putative pyridoxine kinase (pdxK) from Staphylococcus aureus (strain COL).